A 616-amino-acid polypeptide reads, in one-letter code: Dihydroxy-acid dehydratase (616 aa).

D81 is a Mg(2+) binding site. C122 contributes to the [2Fe-2S] cluster binding site. Mg(2+) is bound by residues D123 and K124. K124 is subject to N6-carboxylysine. Residue C195 coordinates [2Fe-2S] cluster. A Mg(2+)-binding site is contributed by E491. S517 acts as the Proton acceptor in catalysis.

It belongs to the IlvD/Edd family. Homodimer. Requires [2Fe-2S] cluster as cofactor. Mg(2+) serves as cofactor.

The enzyme catalyses (2R)-2,3-dihydroxy-3-methylbutanoate = 3-methyl-2-oxobutanoate + H2O. It catalyses the reaction (2R,3R)-2,3-dihydroxy-3-methylpentanoate = (S)-3-methyl-2-oxopentanoate + H2O. It functions in the pathway amino-acid biosynthesis; L-isoleucine biosynthesis; L-isoleucine from 2-oxobutanoate: step 3/4. Its pathway is amino-acid biosynthesis; L-valine biosynthesis; L-valine from pyruvate: step 3/4. In terms of biological role, functions in the biosynthesis of branched-chain amino acids. Catalyzes the dehydration of (2R,3R)-2,3-dihydroxy-3-methylpentanoate (2,3-dihydroxy-3-methylvalerate) into 2-oxo-3-methylpentanoate (2-oxo-3-methylvalerate) and of (2R)-2,3-dihydroxy-3-methylbutanoate (2,3-dihydroxyisovalerate) into 2-oxo-3-methylbutanoate (2-oxoisovalerate), the penultimate precursor to L-isoleucine and L-valine, respectively. The polypeptide is Dihydroxy-acid dehydratase (Salmonella newport (strain SL254)).